The primary structure comprises 297 residues: MTNLNKRPDWIKVKAPNSVEYYQTKDLIKNLRLNTVCEEAACPNIGDCWSRKHATVMILGAVCTRACRFCNVKTGRPDLLDPHEPRRLAEAVQKLNLQHVVITSVDRDDLEDGGASHFAECINEIRRSSPNTTIEILTPDFLRKEGAVEIIANAKPDVFNHNVETVPSLYKTIRPGARYYNSLSLLHNIKKLSPEIFTKSGMMVGLGEEINEVVQVMDDLREANVDFLTIGQYLQPTKSHAEIRKYVTPEEFKYLERIAKTKGFLMVSATPLTRSSYHADKDFQKLKGNYNIRLASM.

Residues Cys37, Cys42, Cys48, Cys63, Cys67, Cys70, and Ser276 each coordinate [4Fe-4S] cluster. Positions 49–265 (WSRKHATVMI…ERIAKTKGFL (217 aa)) constitute a Radical SAM core domain.

The protein belongs to the radical SAM superfamily. Lipoyl synthase family. It depends on [4Fe-4S] cluster as a cofactor.

Its subcellular location is the cytoplasm. The enzyme catalyses [[Fe-S] cluster scaffold protein carrying a second [4Fe-4S](2+) cluster] + N(6)-octanoyl-L-lysyl-[protein] + 2 oxidized [2Fe-2S]-[ferredoxin] + 2 S-adenosyl-L-methionine + 4 H(+) = [[Fe-S] cluster scaffold protein] + N(6)-[(R)-dihydrolipoyl]-L-lysyl-[protein] + 4 Fe(3+) + 2 hydrogen sulfide + 2 5'-deoxyadenosine + 2 L-methionine + 2 reduced [2Fe-2S]-[ferredoxin]. It functions in the pathway protein modification; protein lipoylation via endogenous pathway; protein N(6)-(lipoyl)lysine from octanoyl-[acyl-carrier-protein]: step 2/2. Functionally, catalyzes the radical-mediated insertion of two sulfur atoms into the C-6 and C-8 positions of the octanoyl moiety bound to the lipoyl domains of lipoate-dependent enzymes, thereby converting the octanoylated domains into lipoylated derivatives. This is Lipoyl synthase from Rickettsia prowazekii (strain Madrid E).